The following is a 203-amino-acid chain: dITP/XTP pyrophosphatase (203 aa).

16–21 (SHNRGK) is a binding site for substrate. 2 residues coordinate Mg(2+): Glu-48 and Asp-77. The Proton acceptor role is filled by Asp-77. Substrate-binding positions include Ser-78, 161–164 (FGYD), Lys-184, and 189–190 (HR).

The protein belongs to the HAM1 NTPase family. In terms of assembly, homodimer. Requires Mg(2+) as cofactor.

It carries out the reaction XTP + H2O = XMP + diphosphate + H(+). The enzyme catalyses dITP + H2O = dIMP + diphosphate + H(+). It catalyses the reaction ITP + H2O = IMP + diphosphate + H(+). Functionally, pyrophosphatase that catalyzes the hydrolysis of nucleoside triphosphates to their monophosphate derivatives, with a high preference for the non-canonical purine nucleotides XTP (xanthosine triphosphate), dITP (deoxyinosine triphosphate) and ITP. Seems to function as a house-cleaning enzyme that removes non-canonical purine nucleotides from the nucleotide pool, thus preventing their incorporation into DNA/RNA and avoiding chromosomal lesions. The chain is dITP/XTP pyrophosphatase from Rhodospirillum centenum (strain ATCC 51521 / SW).